The following is a 367-amino-acid chain: Probable outer membrane usher protein LpfC (367 aa).

The N-terminal stretch at 1-30 (MSRKTVSRTFSSFSISVVAVAVASTFSAHA) is a signal peptide.

It belongs to the fimbrial export usher family.

It is found in the cell outer membrane. In terms of biological role, part of the lpfABCC'DE fimbrial operon. LP fimbriae may participate in the interaction with eukaryotic cells by assisting in microcolony formation. Could be involved in the export and assembly of the fimbrial subunits across the outer membrane. This is Probable outer membrane usher protein LpfC (lpfC) from Escherichia coli O157:H7.